A 236-amino-acid polypeptide reads, in one-letter code: Orotidine 5'-phosphate decarboxylase (236 aa).

Substrate is bound by residues Asp11, Lys33, Asp60–Thr69, Thr119, Arg181, Gln190, Gly210, and Arg211. Lys62 (proton donor) is an active-site residue.

The protein belongs to the OMP decarboxylase family. Type 1 subfamily. Homodimer.

The enzyme catalyses orotidine 5'-phosphate + H(+) = UMP + CO2. The protein operates within pyrimidine metabolism; UMP biosynthesis via de novo pathway; UMP from orotate: step 2/2. Catalyzes the decarboxylation of orotidine 5'-monophosphate (OMP) to uridine 5'-monophosphate (UMP). The chain is Orotidine 5'-phosphate decarboxylase from Cutibacterium acnes (strain DSM 16379 / KPA171202) (Propionibacterium acnes).